The chain runs to 618 residues: Uptake hydrogenase large subunit (618 aa).

Ni(2+)-binding residues include C75, C78, C597, and C600.

The protein belongs to the [NiFe]/[NiFeSe] hydrogenase large subunit family. In terms of assembly, heterodimer of a large and a small subunit. Ni(2+) is required as a cofactor.

It is found in the cell membrane. The enzyme catalyses H2 + A = AH2. Functionally, this enzyme recycles the H(2) produced by nitrogenase to increase the production of ATP and to protect nitrogenase against inhibition or damage by O(2) under carbon- or phosphate-limited conditions. The protein is Uptake hydrogenase large subunit (hoxG) of Cupriavidus necator (strain ATCC 17699 / DSM 428 / KCTC 22496 / NCIMB 10442 / H16 / Stanier 337) (Ralstonia eutropha).